The primary structure comprises 470 residues: Pyoverdine export outer membrane protein OpmQ (470 aa).

Residues 1–18 form the signal peptide; it reads MTLPRHLCLLPLSLSLLA. Residue C19 is the site of N-palmitoyl cysteine attachment. C19 carries S-diacylglycerol cysteine lipidation.

It belongs to the outer membrane factor (OMF) (TC 1.B.17) family. Part of the tripartite efflux system PvdRT-OpmQ, which is composed of an inner membrane component with both ATPase and permease domains, PvdT, a periplasmic membrane fusion protein, PvdR, and an outer membrane component, OpmQ.

Its subcellular location is the cell outer membrane. Part of the tripartite efflux system PvdRT-OpmQ required for the secretion into the extracellular milieu of the siderophore pyoverdine (PVD), which is involved in iron acquisition. The system is responsible for export of newly synthesized PVD after the final steps of biosynthesis have taken place in the periplasm. It is also responsible for recycling of PVD after internalization of ferri-PVD into the periplasm by the outer-membrane receptor FpvA and release of iron from PVD, thus making PVD available for new cycles of iron uptake. Contributes to resistance against ampicillin. The protein is Pyoverdine export outer membrane protein OpmQ of Pseudomonas putida (strain ATCC 47054 / DSM 6125 / CFBP 8728 / NCIMB 11950 / KT2440).